The following is a 122-amino-acid chain: Small ribosomal subunit protein uS13 (122 aa).

Residues 95 to 122 (GLPVHGQRTHTNARTRKGPRRGAVGKKK) are disordered.

The protein belongs to the universal ribosomal protein uS13 family. In terms of assembly, part of the 30S ribosomal subunit. Forms a loose heterodimer with protein S19. Forms two bridges to the 50S subunit in the 70S ribosome.

Located at the top of the head of the 30S subunit, it contacts several helices of the 16S rRNA. In the 70S ribosome it contacts the 23S rRNA (bridge B1a) and protein L5 of the 50S subunit (bridge B1b), connecting the 2 subunits; these bridges are implicated in subunit movement. Contacts the tRNAs in the A and P-sites. The chain is Small ribosomal subunit protein uS13 from Nitratidesulfovibrio vulgaris (strain DSM 19637 / Miyazaki F) (Desulfovibrio vulgaris).